Here is a 197-residue protein sequence, read N- to C-terminus: 7-methyl-GTP pyrophosphatase (197 aa).

The active-site Proton acceptor is the Asp-72.

It belongs to the Maf family. YceF subfamily. It depends on a divalent metal cation as a cofactor.

The protein localises to the cytoplasm. The catalysed reaction is N(7)-methyl-GTP + H2O = N(7)-methyl-GMP + diphosphate + H(+). Functionally, nucleoside triphosphate pyrophosphatase that hydrolyzes 7-methyl-GTP (m(7)GTP). May have a dual role in cell division arrest and in preventing the incorporation of modified nucleotides into cellular nucleic acids. The chain is 7-methyl-GTP pyrophosphatase from Bordetella avium (strain 197N).